The sequence spans 396 residues: Elongation factor Tu (396 aa).

Residues 10–205 (KPHVNIGTIG…AVDESIPDPV (196 aa)) enclose the tr-type G domain. The segment at 19–26 (GHVDHGKT) is G1. 19 to 26 (GHVDHGKT) lines the GTP pocket. Thr-26 contributes to the Mg(2+) binding site. The segment at 62–66 (GITIN) is G2. The tract at residues 83–86 (DAPG) is G3. Residues 83–87 (DAPGH) and 138–141 (NKAD) contribute to the GTP site. The tract at residues 138 to 141 (NKAD) is G4. The segment at 175–177 (SAL) is G5.

It belongs to the TRAFAC class translation factor GTPase superfamily. Classic translation factor GTPase family. EF-Tu/EF-1A subfamily. In terms of assembly, monomer.

It localises to the cytoplasm. The catalysed reaction is GTP + H2O = GDP + phosphate + H(+). GTP hydrolase that promotes the GTP-dependent binding of aminoacyl-tRNA to the A-site of ribosomes during protein biosynthesis. This Mycolicibacterium vanbaalenii (strain DSM 7251 / JCM 13017 / BCRC 16820 / KCTC 9966 / NRRL B-24157 / PYR-1) (Mycobacterium vanbaalenii) protein is Elongation factor Tu.